We begin with the raw amino-acid sequence, 425 residues long: [Pyruvate dehydrogenase (acetyl-transferring)] kinase, mitochondrial (425 aa).

At His-178 the chain carries Phosphohistidine; by autocatalysis. The 239-residue stretch at 180 to 418 (NVAVEIALDI…DVYIHLNRLC (239 aa)) folds into the Histidine kinase domain. Residues 296–303 (EILKNSLR), Asp-336, 355–356 (TT), and 379–384 (GFGFGL) contribute to the ATP site.

This sequence belongs to the PDK/BCKDK protein kinase family.

The protein localises to the mitochondrion matrix. The enzyme catalyses L-seryl-[pyruvate dehydrogenase E1 alpha subunit] + ATP = O-phospho-L-seryl-[pyruvate dehydrogenase E1 alpha subunit] + ADP + H(+). Its function is as follows. Inhibits the mitochondrial pyruvate dehydrogenase complex by phosphorylation of the E1 alpha subunit, thus contributing to the regulation of glucose metabolism. In Schizosaccharomyces pombe (strain 972 / ATCC 24843) (Fission yeast), this protein is [Pyruvate dehydrogenase (acetyl-transferring)] kinase, mitochondrial (pkp1).